A 271-amino-acid polypeptide reads, in one-letter code: Dehydrodolichyl diphosphate synthase 7 (271 aa).

Residues 24–41 (FLFRVLCVGPIPTNISFI) traverse the membrane as a helical segment.

The protein belongs to the UPP synthase family. The cofactor is Mg(2+).

It localises to the endoplasmic reticulum membrane. It participates in protein modification; protein glycosylation. Functionally, catalyzes cis-prenyl chain elongation to produce the polyprenyl backbone of dolichol, a glycosyl carrier-lipid required for the biosynthesis of several classes of glycoprotein. The protein is Dehydrodolichyl diphosphate synthase 7 of Arabidopsis thaliana (Mouse-ear cress).